The primary structure comprises 274 residues: NH(3)-dependent NAD(+) synthetase (274 aa).

Position 46-53 (46-53 (GISGGQDS)) interacts with ATP. Asp52 contributes to the Mg(2+) binding site. Arg140 is a binding site for deamido-NAD(+). Residue Thr160 participates in ATP binding. Mg(2+) is bound at residue Glu165. Deamido-NAD(+)-binding residues include Lys173 and Asp180. Positions 189 and 211 each coordinate ATP. A deamido-NAD(+)-binding site is contributed by 260 to 261 (HK).

It belongs to the NAD synthetase family. As to quaternary structure, homodimer.

The enzyme catalyses deamido-NAD(+) + NH4(+) + ATP = AMP + diphosphate + NAD(+) + H(+). It functions in the pathway cofactor biosynthesis; NAD(+) biosynthesis; NAD(+) from deamido-NAD(+) (ammonia route): step 1/1. Its function is as follows. Catalyzes the ATP-dependent amidation of deamido-NAD to form NAD. Uses ammonia as a nitrogen source. The protein is NH(3)-dependent NAD(+) synthetase of Streptococcus pneumoniae (strain Hungary19A-6).